Here is a 292-residue protein sequence, read N- to C-terminus: Outer membrane protein assembly factor BamD (292 aa).

An N-terminal signal peptide occupies residues 1-26 (MIQRPTFFTPTHLLAMLLATFVLITG). Cys-27 carries the N-palmitoyl cysteine lipid modification. Residue Cys-27 is the site of S-diacylglycerol cysteine attachment.

This sequence belongs to the BamD family. As to quaternary structure, part of the Bam complex.

It localises to the cell outer membrane. Its function is as follows. Part of the outer membrane protein assembly complex, which is involved in assembly and insertion of beta-barrel proteins into the outer membrane. This Xylella fastidiosa (strain 9a5c) protein is Outer membrane protein assembly factor BamD.